We begin with the raw amino-acid sequence, 266 residues long: MDVYGLIGNPVGHSLSPPLHAAAYDECGLDARYVTFEPAPDDAAAAIRGAGALGVAGLNVTAPFKQSAASAVATDSMAARVGAVNTIDFSGAAPRGYNTDVAGVKRAFAHHDVSLSGAQAVVVGAGGAGRAAAFALADAGATVRIANRTRAAADELAADVGGTAVGLGDLPRSLADATVLVHATTVGMDDPDTSPVSADALHDDLAVLDAVYSPVETRLLRDAAAAGATTIDGAWMLLYQGAEAFERWTGLDAPVAAMRAALRARL.

Shikimate is bound by residues 14–16 (SLS) and Thr61. Residue Lys65 is the Proton acceptor of the active site. Residues Asn85 and Asp100 each contribute to the shikimate site. Residues 124–128 (GAGGA) and Ala210 contribute to the NADP(+) site. Tyr212 contributes to the shikimate binding site. Gly233 is an NADP(+) binding site.

It belongs to the shikimate dehydrogenase family. Homodimer.

It carries out the reaction shikimate + NADP(+) = 3-dehydroshikimate + NADPH + H(+). It participates in metabolic intermediate biosynthesis; chorismate biosynthesis; chorismate from D-erythrose 4-phosphate and phosphoenolpyruvate: step 4/7. In terms of biological role, involved in the biosynthesis of the chorismate, which leads to the biosynthesis of aromatic amino acids. Catalyzes the reversible NADPH linked reduction of 3-dehydroshikimate (DHSA) to yield shikimate (SA). The sequence is that of Shikimate dehydrogenase (NADP(+)) from Halobacterium salinarum (strain ATCC 29341 / DSM 671 / R1).